The chain runs to 72 residues: Small proline-rich protein 2E (72 aa).

Residues 1-11 (MSYQQQQCKQP) are compositionally biased toward low complexity. A disordered region spans residues 1 to 20 (MSYQQQQCKQPCQPPPVCPT). 3 consecutive repeat copies span residues 21–29 (PKCPEPCPP), 30–38 (PKCPEPCPP), and 39–47 (PKCPQPCPP). The segment at 21–47 (PKCPEPCPPPKCPEPCPPPKCPQPCPP) is 3 X 9 AA tandem repeats of P-K-C-P-[EQ]-P-C-P-P. The segment at 42-72 (PQPCPPQQCQQKCPPVTPSPPCQPKCPPKSK) is disordered. Positions 56 to 72 (PVTPSPPCQPKCPPKSK) are enriched in pro residues.

Belongs to the cornifin (SPRR) family.

The protein localises to the cytoplasm. In terms of biological role, cross-linked envelope protein of keratinocytes. It is a keratinocyte protein that first appears in the cell cytosol, but ultimately becomes cross-linked to membrane proteins by transglutaminase. All that results in the formation of an insoluble envelope beneath the plasma membrane. The sequence is that of Small proline-rich protein 2E (SPRR2E) from Homo sapiens (Human).